A 31-amino-acid polypeptide reads, in one-letter code: Photosystem I reaction center subunit XII (31 aa).

A helical transmembrane segment spans residues 7 to 26; the sequence is QIFIALLTALIPAFFALKLG.

The protein belongs to the PsaM family.

It is found in the plastid. The protein resides in the chloroplast thylakoid membrane. This Euglena granulata protein is Photosystem I reaction center subunit XII.